The primary structure comprises 505 residues: Band 7 protein CG42540 (505 aa).

Residues 1-164 are disordered; the sequence is MPDSMMDMEH…IHRAEARRAD (164 aa). Over residues 47–60 the composition is skewed to basic and acidic residues; that stretch reads SEERDRDRDRERDH. Composition is skewed to low complexity over residues 82–104 and 113–139; these read QLHQ…QQPQ and QQQQ…QQLP. A helical membrane pass occupies residues 178–198; the sequence is LIFLSVALVIMTLPFSLFVCF. The interval 443-505 is disordered; the sequence is GNTPPPLQLA…QQGQQISSAM (63 aa). The span at 451–505 shows a compositional bias: low complexity; it reads LAPQQQMGQQQQPQYQQPQQQQQQYQPQQQQQQQQQQPQQQDQLYQQGQQISSAM.

The protein belongs to the band 7/mec-2 family.

It localises to the membrane. The chain is Band 7 protein CG42540 from Drosophila melanogaster (Fruit fly).